The sequence spans 381 residues: L-lactate dehydrogenase (381 aa).

Residues 1 to 380 (MIISASTDYR…TRDSLVRELG (380 aa)) enclose the FMN hydroxy acid dehydrogenase domain. Tyr-24 serves as a coordination point for substrate. FMN is bound by residues Ser-106 and Gln-127. Tyr-129 contacts substrate. Thr-155 contacts FMN. Residue Arg-164 participates in substrate binding. Lys-251 is an FMN binding site. The active-site Proton acceptor is His-275. Residue Arg-278 coordinates substrate. FMN is bound at residue 306-330 (DSGIRSGLDVVRMIALGADTVLIGR).

Belongs to the FMN-dependent alpha-hydroxy acid dehydrogenase family. Homotetramer. Requires FMN as cofactor.

The protein localises to the cell inner membrane. The catalysed reaction is (S)-lactate + A = pyruvate + AH2. In terms of biological role, catalyzes the conversion of L-lactate to pyruvate. Is coupled to the respiratory chain. This chain is L-lactate dehydrogenase, found in Pseudomonas putida (strain GB-1).